Here is a 776-residue protein sequence, read N- to C-terminus: Venom dipeptidyl peptidase 4 (776 aa).

An N-terminal signal peptide occupies residues 1–25 (MVPLRSFVLLNSLFLVLLAARTVVT). Asn44, Asn66, and Asn329 each carry an N-linked (GlcNAc...) asparagine glycan. Cystine bridges form between Cys449/Cys452 and Cys462/Cys480. N-linked (GlcNAc...) asparagine glycans are attached at residues Asn504 and Asn577. Catalysis depends on Ser638, which acts as the Charge relay system. A disulfide bridge connects residues Cys658 and Cys769. 2 N-linked (GlcNAc...) asparagine glycosylation sites follow: Asn688 and Asn693. Residues Asp717 and His749 each act as charge relay system in the active site.

The protein belongs to the peptidase S9B family. DPPIV subfamily. In terms of tissue distribution, expressed by the venom gland.

The protein localises to the secreted. It carries out the reaction Release of an N-terminal dipeptide, Xaa-Yaa-|-Zaa-, from a polypeptide, preferentially when Yaa is Pro, provided Zaa is neither Pro nor hydroxyproline.. With respect to regulation, inhibited by diprotin A. Venom dipeptidyl-peptidase which removes N-terminal dipeptides sequentially from polypeptides having unsubstituted N-termini provided that the penultimate residue is proline. May process venom proteins into their active forms and/or modulate the chemotactic activity of immune cells after the insect sting. In Vespula vulgaris (Yellow jacket), this protein is Venom dipeptidyl peptidase 4.